Consider the following 1609-residue polypeptide: Probable outer membrane protein pmp21 (1609 aa).

The N-terminal stretch at 1-30 is a signal peptide; it reads MVAKKTVRSYRSSFSHSVIVAILSAGIAFE. Residues 132–145 show a composition bias toward polar residues; the sequence is FSQPTQEPDTSNAV. Disordered regions lie at residues 132-183 and 640-677; these read FSQP…KSPE and TAPV…EVPP. Composition is skewed to basic and acidic residues over residues 149-175 and 651-672; these read ISSD…KEVS and NKDE…KTVE. One can recognise an Autotransporter domain in the interval 1328-1609; it reads ELDFSTNVWG…DFNGGIRIIF (282 aa).

This sequence belongs to the PMP outer membrane protein family.

Its subcellular location is the secreted. The protein resides in the cell wall. It is found in the cell outer membrane. In Chlamydia pneumoniae (Chlamydophila pneumoniae), this protein is Probable outer membrane protein pmp21 (pmp21).